We begin with the raw amino-acid sequence, 897 residues long: High molecular weight rhoptry protein 3 (897 aa).

The first 24 residues, 1 to 24 (MRSKHLVTLFIITFLSFSTVKVWG), serve as a signal peptide directing secretion. 5 disulfides stabilise this stretch: cysteine 157/cysteine 231, cysteine 244/cysteine 253, cysteine 262/cysteine 276, cysteine 421/cysteine 620, and cysteine 475/cysteine 536. Residues 597–615 (FVLYFISIISVLYINEYYY) traverse the membrane as a helical segment. Disordered stretches follow at residues 788 to 845 (KEQS…SNLK) and 859 to 897 (QLDK…ENEL). The segment covering 792 to 801 (KSTSAASTSD) has biased composition (polar residues). The span at 802–817 (ELSGSEGPSTESTSTG) shows a compositional bias: low complexity. Phosphoserine is present on serine 804. The segment covering 820-832 (GEDKTTDNTYKEM) has biased composition (basic and acidic residues). A compositionally biased stretch (basic residues) spans 865–876 (PKKKKSKRKKKR). Basic and acidic residues predominate over residues 877–889 (DSSSDRILLEESK).

In terms of assembly, component of the RhopH complex, composed of CLAG3.1/CLAG3.2, RhopH2 and RhopH3 with a 1:1:1 subunit stoichiometry. Interacts with CLAG3.1/CLAG3.2. Interacts with CDPK1; the interaction promotes RhopH3 phosphorylation in merozoites. Post-translationally, proteolytically cleaved near C-terminus.

The protein localises to the host cell membrane. It is found in the parasitophorous vacuole membrane. Its subcellular location is the cytoplasmic vesicle. It localises to the secretory vesicle. The protein resides in the rhoptry. Participates in the formation of new permeability pathways in Plasmodium-infected erythrocytes enabling the uptake of nutrients from the blood plasma. Required for maintaining invasion capacity of merozoites. Required for the trophozoite to schizont developmental transition of the intracellular parasite. This chain is High molecular weight rhoptry protein 3, found in Plasmodium falciparum.